The chain runs to 1562 residues: Pikromycin polyketide synthase component PikAIII (1562 aa).

The Ketosynthase family 3 (KS3) domain maps to 34-464; the sequence is HEPVAIVGMA…GTNAHVVLEE (431 aa). The segment at 37 to 1475 is module 5; it reads VAIVGMACRL…TPAALAAHLH (1439 aa). The active-site Acyl-thioester intermediate; for beta-ketoacyl synthase activity is the C209. Catalysis depends on for beta-ketoacyl synthase activity residues H344 and H384. An acyltransferase region spans residues 565-866; sequence FVFPGQGTQW…GGQERLVTSL (302 aa). S655 serves as the catalytic Acyl-ester intermediate; for acyltransferase activity. Positions 1116-1293 are beta-ketoacyl reductase; sequence GTVLITGGTG…ATSVAWGLWA (178 aa). NADP(+) contacts are provided by residues 1124–1127, 1147–1150, 1176–1177, K1226, and 1248–1249; these read TGAL, SRSG, DV, and YS. Y1263 functions as the Acyl-ester intermediate; for beta-ketoacyl reductase activity in the catalytic mechanism. Residues 1403 to 1478 enclose the Carrier domain; it reads PALLTLVRTH…ALAAHLHEAY (76 aa). S1438 carries the O-(pantetheine 4'-phosphoryl)serine modification. Residues 1519–1548 form a disordered region; sequence GIEPEPGSGGSDGGAADPGAEPEASIDDLD. Over residues 1532 to 1541 the composition is skewed to low complexity; that stretch reads GAADPGAEPE.

As to quaternary structure, homodimer. Pikromycin PKS consists of a combination of multimodular (PikAI and PikAII) and monomodular (PikAIII and PikAIV) polypeptides each coding for a functional synthase subunit which participates in 1 (monomodular) or 2 (multimodular) of the six FAS-like elongation steps required for formation of the polyketide. Module 1, 2, 3, 4, 5, and 6 participating in biosynthesis steps 1, 2, 3, 4, 5, and 6, respectively. Pantetheine 4'-phosphate serves as cofactor.

It catalyses the reaction 5 (S)-methylmalonyl-CoA + malonyl-CoA + 5 NADPH + 11 H(+) = 10-deoxymethynolide + 6 CO2 + 5 NADP(+) + 6 CoA + 2 H2O. The enzyme catalyses 6 (S)-methylmalonyl-CoA + malonyl-CoA + 5 NADPH + 12 H(+) = narbonolide + 7 CO2 + 5 NADP(+) + 7 CoA + 2 H2O. Its pathway is antibiotic biosynthesis. Involved in the biosynthesis of 12- and 14-membered ring macrolactone antibiotics such as methymycin and neomethymycin, and pikromycin and narbomycin, respectively. Component of the pikromycin PKS which catalyzes the biosynthesis of both precursors 10-deoxymethynolide (12-membered ring macrolactone) and narbonolide (14-membered ring macrolactone). Chain elongation through PikAI, PikAII and PikAIII followed by thioesterase catalyzed termination results in the production of 10-deoxymethynolide, while continued elongation through PikAIV, followed by thioesterase (TE) catalyzed cyclization results in the biosynthesis of the narbonolide. The chain is Pikromycin polyketide synthase component PikAIII from Streptomyces venezuelae.